Here is a 149-residue protein sequence, read N- to C-terminus: Calmodulin-1 (149 aa).

N-acetylalanine is present on Ala2. 4 EF-hand domains span residues 8–43 (EQIA…LGQN), 44–79 (PTEA…KMKD), 81–116 (DSEE…LGEK), and 117–149 (LTDE…MTSK). Residues Asp21, Asp23, Asp25, Thr27, Glu32, Asp57, Asp59, Asn61, Thr63, Glu68, Asp94, Asp96, Asn98, and Glu105 each contribute to the Ca(2+) site. Lys116 carries the post-translational modification N6,N6,N6-trimethyllysine. Ca(2+) contacts are provided by Asp130, Asp132, Asp134, Gln136, and Glu141.

The protein belongs to the calmodulin family.

Functionally, calmodulin mediates the control of a large number of enzymes, ion channels and other proteins by Ca(2+). Among the enzymes to be stimulated by the calmodulin-Ca(2+) complex are a number of protein kinases and phosphatases. The chain is Calmodulin-1 from Branchiostoma floridae (Florida lancelet).